Consider the following 171-residue polypeptide: Putative adenylate kinase (171 aa).

Residues Gly9, Gly11, Lys12, Thr13, and Thr14 each contribute to the ATP site. The segment at 28–51 is NMP; the sequence is SLGELIRQKGFVLGRDPIRGYLEA. The segment at 99-109 is LID; sequence GRGYPEGKVLE. Arg100 provides a ligand contact to ATP.

It belongs to the adenylate kinase family. AK6 subfamily. In terms of assembly, interacts with uS11. Not a structural component of 40S pre-ribosomes, but transiently interacts with them by binding to uS11.

The enzyme catalyses AMP + ATP = 2 ADP. It catalyses the reaction ATP + H2O = ADP + phosphate + H(+). Broad-specificity nucleoside monophosphate (NMP) kinase that catalyzes the reversible transfer of the terminal phosphate group between nucleoside triphosphates and monophosphates. Also has ATPase activity. Involved in the late maturation steps of the 30S ribosomal particles, specifically 16S rRNA maturation. While NMP activity is not required for ribosome maturation, ATPase activity is. Associates transiently with small ribosomal subunit protein uS11. ATP hydrolysis breaks the interaction with uS11. May temporarily remove uS11 from the ribosome to enable a conformational change of the ribosomal RNA that is needed for the final maturation step of the small ribosomal subunit. This chain is Putative adenylate kinase, found in Methanothermobacter thermautotrophicus (strain ATCC 29096 / DSM 1053 / JCM 10044 / NBRC 100330 / Delta H) (Methanobacterium thermoautotrophicum).